Reading from the N-terminus, the 1140-residue chain is MSYNYVVTAQKPTAVNGCVTGHFTSAEDLNLLIAKNTRLEIYVVTAEGLRPVKEVGMYGKTAVMELFRPKGESKDLLFILTAKYNACILEYKQNGDNIDIITRAHGNVQDRIGRPSETGIIGIIDPECRMIGLRLYDGLFKVIPLDRENKELKAFNIRLEELQVIDVKFLYGCQAPTICFVYQDPQGRHVKTYEVSLREKEFNKGPWKQENVEAEASMVIAVPEPFGGAIIIGQESITYHNGDKYLAIAPPIIKQSTIVCHNRVDPNGSRYLLGDMEGRLFMLLLEKEEQMDGTVTLKDLRVELLGETSIAECLTYLDNGVVFVGSRLGDSQLVKLNVDSNEQGSYVVAMETFTNLGPIVDMCVVDLERQGQGQLVTCSGAFKEGSLRIIRNGIGIHEHASIDLPGIKGLWPLRSDSHREMDNMLVLSFVGQTRVLMLNGEEVEETELTGFVDDQQTFFCGNVAHQQLIQITSASVRLVSQEPKALVSEWKEPNGKNISVASCNSNQVVVAVGRALYYLEIRPQELRQINCTEMEHEVACLDITPLGDTNGMSPLCAIGLWTDISARILKLPSFELLHKEMLGGEIIPRSILMTTFESSHYLLCALGDGALFYFGLSLETGLLSDRKKVTLGTQPTVLRTFRSLSTTNVFACSDRPTVIYSSNHKLVFSNVNLKEVNYMCPLNSDGYPDSLALANNSTLTIGTIDEIQKLHIRTVPLYESPRKICYQEVSQCFGVLSSRIEVQDASGGTTALRPSASTQALSSSVSTSKLFSSSTAPHETSFGEEVEVHNLLIIDQHTFEVLHAHQFLQNEYALSLVSCKLGKDPNTYFIVGTAMVYPEEAEPKQGRIVVFHYSDGKLQSLAEKEVKGAVYSMVEFNGKLLASINSTVRLYEWTAEKELRTECNHYNNIMALYLKTKGDFILVGDLMRSVLLLAYKPMEGNFEEIARDFNPNWMSAVEILDDDNFLGAENAFNLFVCQKDSAATTDEERQHLQEVGLSHLGEFVNVFCHGSLVMQNLGETSTPTQGSVLFGTVNGMIGLVTSLSESWYNLLLDMQNRLNKVIKSVGKIEHSFWRSFHTERKTEPATGFIDGDLIESFLDISRPKMQEVVANLQIDDGSGMKREATVDDLIKIVEELTRIH.

The interval 13–356 (TAVNGCVTGH…VVAMETFTNL (344 aa)) is WD repeat beta-propeller A. A WD repeat beta-propeller B; Interaction with CUL4A region spans residues 391 to 708 (RNGIGIHEHA…LTIGTIDEIQ (318 aa)). The segment at 709 to 1043 (KLHIRTVPLY…NGMIGLVTSL (335 aa)) is WD repeat beta-propeller C.

The protein belongs to the DDB1 family. As to quaternary structure, component of the UV-DDB complex which includes DDB1 and DDB2. Component of numerous DCX (DDB1-CUL4-X-box) E3 ubiquitin-protein ligase complexes which consist of a core of DDB1, CUL4A or CUL4B and RBX1, and a substrate receptor, such as CRBN. DDB1 may recruit specific substrate targeting subunits to the DCX complex. These substrate targeting subunits are generally known as DCAF (DDB1- and CUL4-associated factor) or CDW (CUL4-DDB1-associated WD40-repeat) proteins.

It localises to the cytoplasm. The protein localises to the nucleus. It participates in protein modification; protein ubiquitination. Its function is as follows. Protein, which is both involved in DNA repair and protein ubiquitination, as part of the UV-DDB complex and DCX (DDB1-CUL4-X-box) complexes, respectively. Core component of the UV-DDB complex (UV-damaged DNA-binding protein complex), a complex that recognizes UV-induced DNA damage and recruit proteins of the nucleotide excision repair pathway (the NER pathway) to initiate DNA repair. The UV-DDB complex may recognize UV-induced DNA damage and recruit proteins of the nucleotide excision repair pathway (the NER pathway) to initiate DNA repair. Also functions as a component of numerous distinct DCX (DDB1-CUL4-X-box) E3 ubiquitin-protein ligase complexes which mediate the ubiquitination and subsequent proteasomal degradation of target proteins. The functional specificity of the DCX E3 ubiquitin-protein ligase complex is determined by the variable substrate recognition component recruited by DDB1. May play a role in the regulation of the circadian clock. This chain is DNA damage-binding protein 1 (DDB1), found in Gallus gallus (Chicken).